The sequence spans 221 residues: Germin-like protein 8-2 (221 aa).

An N-terminal signal peptide occupies residues 1-24; it reads MASSSFSFLLVAALLGLASWKAIA. A disulfide bond links cysteine 34 and cysteine 49. N-linked (GlcNAc...) asparagine glycans are attached at residues asparagine 54 and asparagine 79. Residues 64–215 form the Cupin type-1 domain; it reads AMLDKPRDTN…AFQVDKKIID (152 aa). Histidine 112, histidine 114, glutamate 119, and histidine 160 together coordinate Mn(2+).

The protein belongs to the germin family. Oligomer (believed to be a pentamer but probably hexamer).

It localises to the secreted. Its subcellular location is the extracellular space. The protein resides in the apoplast. In terms of biological role, plays a role in broad-spectrum disease resistance. Probably has no oxalate oxidase activity even if the active site is conserved. The chain is Germin-like protein 8-2 (GER3) from Oryza sativa subsp. japonica (Rice).